Reading from the N-terminus, the 344-residue chain is UDP-glucose 4-epimerase (344 aa).

Residues 15–17 (GYI), 36–40 (DNLSN), 63–64 (DI), Phe85, and Lys89 contribute to the NAD(+) site. 129–131 (SAT) contacts substrate. Tyr153 (proton acceptor) is an active-site residue. The NAD(+) site is built by Lys157 and Tyr181. Residues 181 to 183 (YFN), 202 to 204 (NNL), 220 to 222 (SIF), Arg235, and 297 to 300 (RKGD) contribute to the substrate site.

It belongs to the NAD(P)-dependent epimerase/dehydratase family. In terms of assembly, homodimer. The cofactor is NAD(+).

It carries out the reaction UDP-alpha-D-glucose = UDP-alpha-D-galactose. The catalysed reaction is UDP-N-acetyl-alpha-D-glucosamine = UDP-N-acetyl-alpha-D-galactosamine. It functions in the pathway carbohydrate metabolism; galactose metabolism. Catalyzes two distinct but analogous reactions: the reversible epimerization of UDP-glucose to UDP-galactose and the reversible epimerization of UDP-N-acetylglucosamine to UDP-N-acetylgalactosamine. The reaction with UDP-Gal plays a critical role in the Leloir pathway of galactose catabolism in which galactose is converted to the glycolytic intermediate glucose 6-phosphate. It contributes to the catabolism of dietary galactose and enables the endogenous biosynthesis of both UDP-Gal and UDP-GalNAc when exogenous sources are limited. Both UDP-sugar interconversions are important in the synthesis of glycoproteins and glycolipids. The chain is UDP-glucose 4-epimerase (galE) from Dictyostelium discoideum (Social amoeba).